The sequence spans 138 residues: Large ribosomal subunit protein uL16 (138 aa).

It belongs to the universal ribosomal protein uL16 family. Part of the 50S ribosomal subunit.

Binds 23S rRNA and is also seen to make contacts with the A and possibly P site tRNAs. The sequence is that of Large ribosomal subunit protein uL16 from Chlamydia muridarum (strain MoPn / Nigg).